The primary structure comprises 239 residues: UPF0173 metal-dependent hydrolase Dvul_0081 (239 aa).

Belongs to the UPF0173 family.

This Nitratidesulfovibrio vulgaris (strain DP4) (Desulfovibrio vulgaris) protein is UPF0173 metal-dependent hydrolase Dvul_0081.